Here is a 301-residue protein sequence, read N- to C-terminus: Nucleosome assembly protein 1;3 (301 aa).

Residues 15–69 adopt a coiled-coil conformation; it reads VETLKNKLQALAEQHVDVLESLAPVVRKRVDVLIEIQSQHDELEAKFLEEKSALE. The Nuclear export signal signature appears at 36-51; sequence LAPVVRKRVDVLIEIQ. Positions 279-301 are disordered; the sequence is EDYGASWVDDEEDDDDEYSDEEA. A Phosphoserine; by CK2 modification is found at serine 297.

The protein belongs to the nucleosome assembly protein (NAP) family.

The protein resides in the nucleus. The protein localises to the cytoplasm. Its function is as follows. May modulate chromatin structure by regulation of nucleosome assembly/disassembly. This Oryza sativa subsp. indica (Rice) protein is Nucleosome assembly protein 1;3 (NAP1;3).